The sequence spans 702 residues: Dissimilatory sulfite reductase MccA (702 aa).

An N-terminal signal peptide occupies residues 1–39 (MLSGWSVLKGGNMKYWDKALLSLFMCVSTLSIAATHAVA). Heme c contacts are provided by Cys155, Cys158, His159, and His171. Lys220 and Tyr297 together coordinate substrate. Cys314, Cys317, His318, Cys351, Cys354, His355, His360, Cys372, Cys375, and His376 together coordinate heme c. Arg378 is a substrate binding site. Cys411 is a binding site for Cu(+). Heme c is bound by residues His423, Cys430, Cys433, His434, His437, Cys474, Cys477, His478, His491, Cys496, Cys499, and His500. Cu(+) is bound at residue Cys507. 5 residues coordinate heme c: His528, Cys574, Cys590, His591, and His675.

Belongs to the multiheme cytochrome c family. In terms of assembly, homotrimer. Cu(+) is required as a cofactor. It depends on heme c as a cofactor.

The protein resides in the periplasm. The catalysed reaction is [protein]-disulfide + hydrogen sulfide + 2 A + 3 H2O = [protein]-dithiol + sulfite + 2 AH2 + H(+). Its pathway is sulfur metabolism; sulfite reduction. In terms of biological role, respiratory sulfite reductase that catalyzes the reduction of sulfite to sulfide in a single step, consuming six electrons in the process. Required for sulfite respiration under anaerobic growth conditions. Has only marginal activity with nitrite. In Wolinella succinogenes (strain ATCC 29543 / DSM 1740 / CCUG 13145 / JCM 31913 / LMG 7466 / NCTC 11488 / FDC 602W) (Vibrio succinogenes), this protein is Dissimilatory sulfite reductase MccA.